The following is a 121-amino-acid chain: Large ribosomal subunit protein bL19 (121 aa).

It belongs to the bacterial ribosomal protein bL19 family.

Its function is as follows. This protein is located at the 30S-50S ribosomal subunit interface and may play a role in the structure and function of the aminoacyl-tRNA binding site. The protein is Large ribosomal subunit protein bL19 (rplS) of Chlamydia muridarum (strain MoPn / Nigg).